Reading from the N-terminus, the 84-residue chain is Sec-independent protein translocase protein TatA (84 aa).

The helical transmembrane segment at 1–21 threads the bilayer; it reads MGGISIWQLLIVAVIVVLLFG. 2 stretches are compositionally biased toward basic and acidic residues: residues 42-55 and 64-84; these read AMSDDDAKQDKTSQ and IADKQGEAKKEDAKSQDKEQV. Residues 42–84 form a disordered region; that stretch reads AMSDDDAKQDKTSQDADFTAKSIADKQGEAKKEDAKSQDKEQV.

This sequence belongs to the TatA/E family. In terms of assembly, the Tat system comprises two distinct complexes: a TatABC complex, containing multiple copies of TatA, TatB and TatC subunits, and a separate TatA complex, containing only TatA subunits. Substrates initially bind to the TatABC complex, which probably triggers association of the separate TatA complex to form the active translocon.

The protein resides in the cell inner membrane. Functionally, part of the twin-arginine translocation (Tat) system that transports large folded proteins containing a characteristic twin-arginine motif in their signal peptide across membranes. TatA could form the protein-conducting channel of the Tat system. The polypeptide is Sec-independent protein translocase protein TatA (Salmonella typhi).